A 902-amino-acid polypeptide reads, in one-letter code: DNA mismatch repair protein MutS (902 aa).

654–661 (GPNMGGKS) is a binding site for ATP.

The protein belongs to the DNA mismatch repair MutS family.

Its function is as follows. This protein is involved in the repair of mismatches in DNA. It is possible that it carries out the mismatch recognition step. This protein has a weak ATPase activity. The sequence is that of DNA mismatch repair protein MutS from Xanthomonas axonopodis pv. citri (strain 306).